The following is a 52-amino-acid chain: UPF0391 membrane protein Avin_10980 (52 aa).

Transmembrane regions (helical) follow at residues 4–24 (WSIIFLVVAIIAGLLGFGGIA) and 29–49 (GIAKILFALFLILFVVSLLFG).

The protein belongs to the UPF0391 family.

It is found in the cell membrane. In Azotobacter vinelandii (strain DJ / ATCC BAA-1303), this protein is UPF0391 membrane protein Avin_10980.